Consider the following 413-residue polypeptide: Putative acid phosphatase 11 (413 aa).

The active-site Nucleophile is histidine 35. The Proton donor role is filled by aspartate 315. The cysteines at positions 381 and 387 are disulfide-linked.

Belongs to the histidine acid phosphatase family.

It carries out the reaction a phosphate monoester + H2O = an alcohol + phosphate. In Caenorhabditis elegans, this protein is Putative acid phosphatase 11 (pho-11).